The sequence spans 232 residues: MTDEVSNTAAADVRDNGQIVFDAGAIRVLAVLAEKEALTPDAYPMSINALTNGCNQLTSRDPVMALTEVDVQGILQELIADKFVAEVNQAGARVSKYEHRLRMKWSLEQDKLAVLTVLMLRGIQTAGEIRTRSGRLHEFATIADVEAALQFLIDKYPPLVARLPRAPGTKETRYAPLLSSEVFPEAGELPVAAASGVSRHDRIGQLEAEVSSLRDEVEALKAQFQQFKQQFE.

Belongs to the UPF0502 family.

The chain is UPF0502 protein mma_2112 from Janthinobacterium sp. (strain Marseille) (Minibacterium massiliensis).